The primary structure comprises 713 residues: Leucine-rich repeat neuronal protein 2 (713 aa).

Residues 1-18 form the signal peptide; sequence MRLLVAPLLLAWVAGATA. The Extracellular portion of the chain corresponds to 19–630; the sequence is AVPVVPWHVP…CHRALGDRPG (612 aa). In terms of domain architecture, LRRNT spans 20 to 69; that stretch reads VPVVPWHVPCPPQCACQIRPWYTPRSSYREATTVDCNDLFLTAVPPALPA. 12 LRR repeats span residues 70–91, 94–115, 118–139, 142–163, 166–187, 190–211, 214–235, 238–259, 262–283, 286–305, 311–333, and 336–357; these read GTQT…ELGY, NLTE…DFHA, QLLS…SFAG, SLQE…AFSG, NLLR…WFEM, NLEI…NFRP, NLRS…ALEG, SLES…ALEQ, GLKF…DFAN, HLKE…DKFA, ELTK…AFHH, and QMET…TVES. Residue Asn-94 is glycosylated (N-linked (GlcNAc...) asparagine). The LRRCT domain maps to 369–422; sequence NPIRCDCVIRWANATGTRVRFIEPQSTLCAEPPDLQRLPVREVPFREMTDHCLP. A glycan (N-linked (GlcNAc...) asparagine) is linked at Asn-381. An Ig-like C2-type domain is found at 422–511; it reads PLISPRSFPP…LVGADTKTVS (90 aa). The cysteines at positions 445 and 497 are disulfide-linked. N-linked (GlcNAc...) asparagine glycans are attached at residues Asn-555 and Asn-583. The chain crosses the membrane as a helical span at residues 631-651; that stretch reads LIAILALAVLLLAAGLAAHLG. The Cytoplasmic portion of the chain corresponds to 652–713; it reads TGQPRKGVGG…TLLPPLSQNS (62 aa).

In terms of tissue distribution, overamplified in malignant gliomas.

The protein localises to the membrane. This is Leucine-rich repeat neuronal protein 2 (LRRN2) from Homo sapiens (Human).